Consider the following 263-residue polypeptide: tRNA uridine(34) hydroxylase (263 aa).

The Rhodanese domain maps to 129–223; sequence EGREVVTLDT…YFEETDGAFY (95 aa). The active-site Cysteine persulfide intermediate is cysteine 183.

This sequence belongs to the TrhO family.

It catalyses the reaction uridine(34) in tRNA + AH2 + O2 = 5-hydroxyuridine(34) in tRNA + A + H2O. Functionally, catalyzes oxygen-dependent 5-hydroxyuridine (ho5U) modification at position 34 in tRNAs. The protein is tRNA uridine(34) hydroxylase of Delftia acidovorans (strain DSM 14801 / SPH-1).